We begin with the raw amino-acid sequence, 724 residues long: Acyl-coenzyme A oxidase 2 (724 aa).

The interval 1-48 (MAMLSQPNDGHDHPEKKDPDTTPKQVAGVISSQDPPHPAKDVAEERAR) is disordered. Composition is skewed to basic and acidic residues over residues 9–21 (DGHD…DPDT) and 37–48 (HPAKDVAEERAR).

The protein belongs to the acyl-CoA oxidase family. The cofactor is FAD.

Its subcellular location is the peroxisome. It catalyses the reaction a 2,3-saturated acyl-CoA + O2 = a (2E)-enoyl-CoA + H2O2. It participates in lipid metabolism; peroxisomal fatty acid beta-oxidation. This is Acyl-coenzyme A oxidase 2 (POX2) from Candida tropicalis (Yeast).